A 525-amino-acid chain; its full sequence is ATP synthase subunit beta, mitochondrial (525 aa).

A mitochondrion-targeting transit peptide spans 1–44 (MLKKQALSGIRRFSLATKQSFVKTSYKLPRKSWLNTAKFNTIRY). 203-210 (GGAGVGKT) provides a ligand contact to ATP.

It belongs to the ATPase alpha/beta chains family. In terms of assembly, F-type ATPases have 2 components, CF(1) - the catalytic core - and CF(0) - the membrane proton channel. CF(1) has five subunits: alpha(3), beta(3), gamma(1), delta(1), epsilon(1). CF(0) has three main subunits: a, b and c.

It localises to the mitochondrion. It is found in the mitochondrion inner membrane. It carries out the reaction ATP + H2O + 4 H(+)(in) = ADP + phosphate + 5 H(+)(out). In terms of biological role, mitochondrial membrane ATP synthase (F(1)F(0) ATP synthase or Complex V) produces ATP from ADP in the presence of a proton gradient across the membrane which is generated by electron transport complexes of the respiratory chain. F-type ATPases consist of two structural domains, F(1) - containing the extramembraneous catalytic core, and F(0) - containing the membrane proton channel, linked together by a central stalk and a peripheral stalk. During catalysis, ATP synthesis in the catalytic domain of F(1) is coupled via a rotary mechanism of the central stalk subunits to proton translocation. Subunits alpha and beta form the catalytic core in F(1). Rotation of the central stalk against the surrounding alpha(3)beta(3) subunits leads to hydrolysis of ATP in three separate catalytic sites on the beta subunits. This Schizosaccharomyces pombe (strain 972 / ATCC 24843) (Fission yeast) protein is ATP synthase subunit beta, mitochondrial (atp2).